The following is a 295-amino-acid chain: 33 kDa chaperonin (295 aa).

Disulfide bonds link Cys233-Cys235 and Cys267-Cys270.

Belongs to the HSP33 family. Post-translationally, under oxidizing conditions two disulfide bonds are formed involving the reactive cysteines. Under reducing conditions zinc is bound to the reactive cysteines and the protein is inactive.

It is found in the cytoplasm. Functionally, redox regulated molecular chaperone. Protects both thermally unfolding and oxidatively damaged proteins from irreversible aggregation. Plays an important role in the bacterial defense system toward oxidative stress. This is 33 kDa chaperonin from Mannheimia succiniciproducens (strain KCTC 0769BP / MBEL55E).